A 320-amino-acid chain; its full sequence is Methionine import ATP-binding protein MetN (320 aa).

The ABC transporter domain occupies 2–237; that stretch reads IEIKNVSKYF…PSSEMKKLIG (236 aa). Position 34-41 (34-41) interacts with ATP; the sequence is GHSGAGKS.

It belongs to the ABC transporter superfamily. Methionine importer (TC 3.A.1.24) family. As to quaternary structure, the complex is composed of two ATP-binding proteins (MetN), two transmembrane proteins (MetI) and a solute-binding protein (MetQ).

The protein resides in the cell membrane. The enzyme catalyses L-methionine(out) + ATP + H2O = L-methionine(in) + ADP + phosphate + H(+). It carries out the reaction D-methionine(out) + ATP + H2O = D-methionine(in) + ADP + phosphate + H(+). Its function is as follows. Part of the ABC transporter complex MetNIQ involved in methionine import. Responsible for energy coupling to the transport system. The protein is Methionine import ATP-binding protein MetN of Clostridium acetobutylicum (strain ATCC 824 / DSM 792 / JCM 1419 / IAM 19013 / LMG 5710 / NBRC 13948 / NRRL B-527 / VKM B-1787 / 2291 / W).